A 69-amino-acid polypeptide reads, in one-letter code: DNA gyrase inhibitor YacG (69 aa).

Cysteine 13, cysteine 16, cysteine 32, and cysteine 36 together coordinate Zn(2+).

The protein belongs to the DNA gyrase inhibitor YacG family. In terms of assembly, interacts with GyrB. Zn(2+) serves as cofactor.

Its function is as follows. Inhibits all the catalytic activities of DNA gyrase by preventing its interaction with DNA. Acts by binding directly to the C-terminal domain of GyrB, which probably disrupts DNA binding by the gyrase. The sequence is that of DNA gyrase inhibitor YacG from Neisseria meningitidis serogroup A / serotype 4A (strain DSM 15465 / Z2491).